Consider the following 907-residue polypeptide: Protein translocase subunit SecA (907 aa).

ATP is bound by residues glutamine 87, glycine 105 to threonine 109, and aspartate 512. Zn(2+) contacts are provided by cysteine 891, cysteine 893, cysteine 902, and histidine 903.

Belongs to the SecA family. Monomer and homodimer. Part of the essential Sec protein translocation apparatus which comprises SecA, SecYEG and auxiliary proteins SecDF-YajC and YidC. Requires Zn(2+) as cofactor.

The protein localises to the cell inner membrane. The protein resides in the cytoplasm. It catalyses the reaction ATP + H2O + cellular proteinSide 1 = ADP + phosphate + cellular proteinSide 2.. Part of the Sec protein translocase complex. Interacts with the SecYEG preprotein conducting channel. Has a central role in coupling the hydrolysis of ATP to the transfer of proteins into and across the cell membrane, serving both as a receptor for the preprotein-SecB complex and as an ATP-driven molecular motor driving the stepwise translocation of polypeptide chains across the membrane. This chain is Protein translocase subunit SecA, found in Tolumonas auensis (strain DSM 9187 / NBRC 110442 / TA 4).